An 861-amino-acid polypeptide reads, in one-letter code: MDASKYVRYTPEQVEALERLYYECPKPSSLRRQQLVRECPALANVDPKQIKVWFQNRRCREKQRKESSRLQALNRKLTAMNKLLMEENDRLQKQVSQLVYDHGRHGVAAAGMMRRVPAFPPQAAAAAGHQLATATDTSCESVVTSGHHHQQQQHNVVQPPPRDASPAGLMSIAEETLTEFLSKATGTAVEWLQMPGMKPGPDSIGIIAISHGCAGVAARACGLVGMEPAKVAEILKDRPLWLRDCRSMDVVNVLPAGANGTIELLYMQLYAPTTLAPARDFWLLRYTSILDDGSLVVCERSLSSKQGGPSMPLVQPFIRGEMLPSGFLIRPSDGGGSVIHIVDHMDLEPWSVPEVVRPLYESSAMVAQKISMAALRYLRQVAHEDTRSVITGWGRQPAALRALSQKLTRGFNEALNGLADDGWSVIESDGVDDVCISVNSSKVIGCNATFSSGLPIVSTGVLCAKASMLLQDVSPPSLLQFLREHRSQWADSNLDAFFASAMKPNFCNLPMSRLGGFSGQVILPLAHTFEPEEFLEVIKLGNASNYQDTLVHRDLFLLQMYNGVEESSAGTCSELIFAPIDASFSDDSPLLPSGFRIIPIDSPLDTSSPNCTLDLASTLEAATPRSRISGVNGGGGTCAAAAASSSSKAVMTIAFQFAFDGHLQDSVAAMARQYMRNIISSVQRIAVALSSSRLVPPGAAAAAAQLSPVTPEAATLPRWICQSYRFHFGAELIKSVDANSSNESILKAVWHHPSAILCCSLKAMPVFTFANQSGLDMLETTLVALQDMTLEKVFDDQGRKNLCTELPNIMEQGMACMEGGVCVSSVGRAASYEKAVAWKVVDGDGGGAHCISFMFINWTFL.

Residues 2–65 constitute a DNA-binding region (homeobox); the sequence is DASKYVRYTP…NRRCREKQRK (64 aa). Positions 57 to 99 form a coiled coil; sequence RRCREKQRKESSRLQALNRKLTAMNKLLMEENDRLQKQVSQLV. Residues 162–390 enclose the START domain; it reads RDASPAGLMS…VAHEDTRSVI (229 aa).

This sequence belongs to the HD-ZIP homeobox family. Class III subfamily. In terms of tissue distribution, expressed in roots, stems and leaf blades.

It localises to the nucleus. In terms of biological role, probable transcription factor. In Oryza sativa subsp. indica (Rice), this protein is Homeobox-leucine zipper protein HOX29 (HOX29).